The following is a 381-amino-acid chain: Cytochrome b (381 aa).

4 consecutive transmembrane segments (helical) span residues F33–M53, W77–V98, W113–L133, and F178–L198. Heme b-binding residues include H83 and H97. The heme b site is built by H182 and H196. H201 is an a ubiquinone binding site. The next 4 helical transmembrane spans lie at I226–S246, L288–H308, V320–G340, and F347–P367.

This sequence belongs to the cytochrome b family. In terms of assembly, the cytochrome bc1 complex contains 11 subunits: 3 respiratory subunits (MT-CYB, CYC1 and UQCRFS1), 2 core proteins (UQCRC1 and UQCRC2) and 6 low-molecular weight proteins (UQCRH/QCR6, UQCRB/QCR7, UQCRQ/QCR8, UQCR10/QCR9, UQCR11/QCR10 and a cleavage product of UQCRFS1). This cytochrome bc1 complex then forms a dimer. Requires heme b as cofactor.

The protein resides in the mitochondrion inner membrane. In terms of biological role, component of the ubiquinol-cytochrome c reductase complex (complex III or cytochrome b-c1 complex) that is part of the mitochondrial respiratory chain. The b-c1 complex mediates electron transfer from ubiquinol to cytochrome c. Contributes to the generation of a proton gradient across the mitochondrial membrane that is then used for ATP synthesis. The chain is Cytochrome b (MT-CYB) from Dasyurus hallucatus (Northern quoll).